A 648-amino-acid polypeptide reads, in one-letter code: Phosphatidylinositol-3,5-bisphosphate 3-phosphatase MTMR14 (648 aa).

Residues 1 to 19 (MAGARAAAAASAGSTASSG) show a composition bias toward low complexity. A disordered region spans residues 1–27 (MAGARAAAAASAGSTASSGSPPPQEPG). K193 carries the N6-acetyllysine modification. 2 N-linked (GlcNAc...) asparagine glycosylation sites follow: N225 and N240. The active-site Phosphocysteine intermediate is C329. The a 1,2-diacyl-sn-glycero-3-phospho-(1D-myo-inositol-3,5-bisphosphate) site is built by G332, W333, D334, R335, and R381. Residues G332, W333, D334, R335, and R381 each contribute to the a 1,2-diacyl-sn-glycero-3-phospho-(1D-myo-inositol-3-phosphate) site. The disordered stretch occupies residues 471 to 544 (PTQAAWRKSH…PRSVDHPLPG (74 aa)). The span at 494 to 506 (PSEERLPSHHGLT) shows a compositional bias: basic and acidic residues. A Phosphoserine modification is found at S516. N517 is a glycosylation site (N-linked (GlcNAc...) asparagine). Residues S528, S578, and S622 each carry the phosphoserine modification. R636 bears the Omega-N-methylarginine mark.

Belongs to the protein-tyrosine phosphatase family. Non-receptor class myotubularin subfamily.

The protein localises to the cytoplasm. The enzyme catalyses a 1,2-diacyl-sn-glycero-3-phospho-(1D-myo-inositol-3,5-bisphosphate) + H2O = a 1,2-diacyl-sn-glycero-3-phospho-(1D-myo-inositol-5-phosphate) + phosphate. The catalysed reaction is a 1,2-diacyl-sn-glycero-3-phospho-(1D-myo-inositol-3-phosphate) + H2O = a 1,2-diacyl-sn-glycero-3-phospho-(1D-myo-inositol) + phosphate. Its function is as follows. Lipid phosphatase that specifically dephosphorylates the D-3 position of phosphatidylinositol 3-phosphate and phosphatidylinositol 3,5-bisphosphate, generating phosphatidylinositol and phosphatidylinositol 5-phosphate. The protein is Phosphatidylinositol-3,5-bisphosphate 3-phosphatase MTMR14 of Mus musculus (Mouse).